The sequence spans 104 residues: N(4)-acetylcytidine amidohydrolase (104 aa).

Positions 6-94 (ITFFQRFQND…IAEIYPNQTQ (89 aa)) constitute an ASCH domain. The Proton acceptor role is filled by Lys-21. Thr-24 serves as the catalytic Nucleophile. Glu-74 serves as the catalytic Proton donor.

This sequence belongs to the N(4)-acetylcytidine amidohydrolase family.

The enzyme catalyses N(4)-acetylcytidine + H2O = cytidine + acetate + H(+). It catalyses the reaction N(4)-acetyl-2'-deoxycytidine + H2O = 2'-deoxycytidine + acetate + H(+). The catalysed reaction is N(4)-acetylcytosine + H2O = cytosine + acetate + H(+). Functionally, catalyzes the hydrolysis of N(4)-acetylcytidine (ac4C). The sequence is that of N(4)-acetylcytidine amidohydrolase (yqfB) from Salmonella dublin (strain CT_02021853).